A 429-amino-acid chain; its full sequence is Forkhead box protein P3 (429 aa).

The disordered stretch occupies residues 1-67; that stretch reads MPNPRPAKPM…SSLNPLPPSQ (67 aa). Serine 19 is modified (phosphoserine; by CDK2). Position 31 is an N6-acetyllysine (lysine 31). Residues 56–67 are compositionally biased toward low complexity; the sequence is TSSSLNPLPPSQ. The Nuclear export signal motif lies at 67 to 75; sequence QLQLPTVPL. The short motif at 91-95 is the LXXLL motif element; that stretch reads LQALL. The segment at 105 to 189 is essential for transcriptional repressor activity and for interaction with KAT5 and HDAC7; the sequence is LSTVDAHAQT…SNLLAAPQGS (85 aa). The interval 148–198 is interaction with IKZF4; that stretch reads LPPGINVASLEWVSREPALLCTFPRSGTPRKDSNLLAAPQGSYPLLANGVC. At threonine 175 the chain carries Phosphothreonine; by CDK2. The C2H2-type zinc finger occupies 196-221; the sequence is GVCKWPGCEKVFEEPEEFLKHCQADH. The Nuclear export signal signature appears at 238 to 247; that stretch reads VQSLEQQLEL. Residues 238–259 are leucine-zipper; that stretch reads VQSLEQQLELEKEKLGAMQAHL. Residues lysine 249 and lysine 251 each participate in a glycyl lysine isopeptide (Lys-Gly) (interchain with G-Cter in ubiquitin) cross-link. N6-acetyllysine; alternate is present on residues lysine 262 and lysine 267. Glycyl lysine isopeptide (Lys-Gly) (interchain with G-Cter in ubiquitin); alternate cross-links involve residues lysine 262 and lysine 267. Residues 277–336 form an interaction with RUNX1 region; sequence SSCCIVATSTQGSVLPAWSAPREAPDGGLFAVRRHLWGSHGNSSFPEFFHNMDYFKYHNM. The fork-head DNA-binding region spans 337-423; that stretch reads RPPFTYATLI…RKKRSQRPNK (87 aa). Lysine 393 is covalently cross-linked (Glycyl lysine isopeptide (Lys-Gly) (interchain with G-Cter in ubiquitin)). The Nuclear localization signal signature appears at 414-417; the sequence is RKKR. Residue serine 418 is modified to Phosphoserine. A propeptide spanning residues 418–429 is cleaved from the precursor; that stretch reads SQRPNKCSNPCP.

Homodimer. Dimerization is essential for its transcriptional regulator activity. Interacts with IKZF3. Interacts (via LXXLL motif) with isoform 4 of RORA (via AF-2 motif). Interacts with STUB1 and HSPA1A/B. Interacts with IKZF4, HDAC7 and KAT5. Interacts with RUNX1, RUNX2, RUNX3 and NFATC2. Interacts with RORC. Interacts with HDAC9 in the absence of T-cell stimulation. Interacts with RELA, PPP1CA, PPP1CB, PPP1CG, HSPA8 and USP7. Acetylation on lysine residues stabilizes FOXP3 and promotes differentiation of T-cells into induced regulatory T-cells (iTregs) associated with suppressive functions. Acetylation is mediated by a coordinated action of KAT5 and EP300/p300 acetyltransferases: EP300/p300 is required to enhance KAT5 autoacetylation, promoting acetylation of FOXP3 by KAT5. Deacetylated by SIRT1. In terms of processing, polyubiquitinated, leading to its proteasomal degradation in regulatory T-cells (Treg) which is mediated by STUB1 in a HSPA1A/B-dependent manner. Deubiquitinated by USP7 and USP44 leading to increase in protein stability. Post-translationally, phosphorylation at Ser-418 regulates its transcriptional repressor activity and consequently, regulatory T-cells (Treg) suppressive function. Phosphorylation by CDK2 negatively regulates its transcriptional activity and protein stability. Undergoes proteolytic cleavage in activated regulatory T-cells (Treg), and can be cleaved at either the N- or C-terminal site, or at both sites. Treg expressing the form cleaved at C-terminal site or both N- and C-terminal sites exhibit an increased induction of IL10 and an increased capacity to suppress proliferation of conventional T-cells in vitro. Treg expressing the form cleaved at only the C-terminal site are highly effective at preventing experimental colitis in an in vivo model of inflammatory bowel disease. High level of expression in thymus and spleen.

Its subcellular location is the nucleus. It is found in the cytoplasm. In terms of biological role, transcriptional regulator which is crucial for the development and inhibitory function of regulatory T-cells (Treg). Plays an essential role in maintaining homeostasis of the immune system by allowing the acquisition of full suppressive function and stability of the Treg lineage, and by directly modulating the expansion and function of conventional T-cells. Can act either as a transcriptional repressor or a transcriptional activator depending on its interactions with other transcription factors, histone acetylases and deacetylases. The suppressive activity of Treg involves the coordinate activation of many genes, including CTLA4 and TNFRSF18 by FOXP3 along with repression of genes encoding cytokines such as interleukin-2 (IL2) and interferon-gamma (IFNG). Inhibits cytokine production and T-cell effector function by repressing the activity of two key transcription factors, RELA and NFATC2. Mediates transcriptional repression of IL2 via its association with histone acetylase KAT5 and histone deacetylase HDAC7. Can activate the expression of TNFRSF18, IL2RA and CTLA4 and repress the expression of IL2 and IFNG via its association with transcription factor RUNX1. Inhibits the differentiation of IL17 producing helper T-cells (Th17) by antagonizing RORC function, leading to down-regulation of IL17 expression, favoring Treg development. Inhibits the transcriptional activator activity of RORA. Can repress the expression of IL2 and IFNG via its association with transcription factor IKZF4. This chain is Forkhead box protein P3 (Foxp3), found in Mus musculus (Mouse).